Here is a 193-residue protein sequence, read N- to C-terminus: Pyridoxal 5'-phosphate synthase subunit PdxT (193 aa).

48-50 contributes to the L-glutamine binding site; sequence GES. C80 functions as the Nucleophile in the catalytic mechanism. Residues R107 and 136–137 contribute to the L-glutamine site; that span reads IR. Active-site charge relay system residues include H172 and E174.

This sequence belongs to the glutaminase PdxT/SNO family. As to quaternary structure, in the presence of PdxS, forms a dodecamer of heterodimers. Only shows activity in the heterodimer.

The catalysed reaction is aldehydo-D-ribose 5-phosphate + D-glyceraldehyde 3-phosphate + L-glutamine = pyridoxal 5'-phosphate + L-glutamate + phosphate + 3 H2O + H(+). It carries out the reaction L-glutamine + H2O = L-glutamate + NH4(+). It functions in the pathway cofactor biosynthesis; pyridoxal 5'-phosphate biosynthesis. Catalyzes the hydrolysis of glutamine to glutamate and ammonia as part of the biosynthesis of pyridoxal 5'-phosphate. The resulting ammonia molecule is channeled to the active site of PdxS. The chain is Pyridoxal 5'-phosphate synthase subunit PdxT from Clostridium botulinum (strain Loch Maree / Type A3).